The sequence spans 244 residues: tRNA (guanine-N(1)-)-methyltransferase (244 aa).

S-adenosyl-L-methionine is bound by residues glycine 111 and 130-135 (IGDYVL).

Belongs to the RNA methyltransferase TrmD family. As to quaternary structure, homodimer.

The protein localises to the cytoplasm. It catalyses the reaction guanosine(37) in tRNA + S-adenosyl-L-methionine = N(1)-methylguanosine(37) in tRNA + S-adenosyl-L-homocysteine + H(+). Functionally, specifically methylates guanosine-37 in various tRNAs. The protein is tRNA (guanine-N(1)-)-methyltransferase of Phytoplasma australiense.